Consider the following 538-residue polypeptide: Chaperonin GroEL (538 aa).

Residues 29–32 (TLGP), 86–90 (DGTTT), Gly-413, 479–481 (DAL), and Asp-495 contribute to the ATP site.

Belongs to the chaperonin (HSP60) family. As to quaternary structure, forms a cylinder of 14 subunits composed of two heptameric rings stacked back-to-back. Interacts with the co-chaperonin GroES.

Its subcellular location is the cytoplasm. It carries out the reaction ATP + H2O + a folded polypeptide = ADP + phosphate + an unfolded polypeptide.. In terms of biological role, together with its co-chaperonin GroES, plays an essential role in assisting protein folding. The GroEL-GroES system forms a nano-cage that allows encapsulation of the non-native substrate proteins and provides a physical environment optimized to promote and accelerate protein folding. The polypeptide is Chaperonin GroEL (Thermotoga neapolitana).